The chain runs to 392 residues: Fasciculation and elongation protein zeta-1 (392 aa).

Residues 1–37 (MEAPLVSLDEEFEDLRPSCSEDPEEKPQCFYGSSPHH) are disordered. The residue at position 58 (Ser-58) is a Phosphoserine. Residues 175–198 (MQNSPDPEEEEEVLEEEDGGETSS) are disordered. Acidic residues predominate over residues 180-194 (DPEEEEEVLEEEDGG). Residues 230-298 (SELTELLDQV…KKRRKEKGLS (69 aa)) are a coiled coil. Phosphoserine is present on residues Ser-298 and Ser-316.

It belongs to the zygin family. Homodimer; disulfide-linked. May form heterodimers with FEZ2. Interacts with the NH2-terminal variable region (V1) of PKC zeta and weakly with that of PKC epsilon. Interacts with UBE4B. Interacts with SAP30L. Interacts with SCOC and ULK1; SCOC interferes with ULK1-binding to FEZ1. Directly interacts with SCOC and UVRAG. Stabilizes the interaction between SCOC and UVRAG during amino acid starvation. Phosphorylated by protein kinase C zeta; which enhances interaction with UBE4B and polyubiquitination. Post-translationally, polyubiquitinated in a UBE4B-dependent manner; which does not lead to proteasomal degradation and may be important for neurogenic activity. Polyubiquitin linkage seems to be mainly through Lys-26. In terms of tissue distribution, mainly expressed in brain.

It localises to the cytoplasm. Its subcellular location is the cytoskeleton. The protein resides in the microtubule organizing center. The protein localises to the centrosome. It is found in the cell membrane. In terms of biological role, may be involved in axonal outgrowth as component of the network of molecules that regulate cellular morphology and axon guidance machinery. Able to restore partial locomotion and axonal fasciculation to C.elegans unc-76 mutants in germline transformation experiments. May participate in the transport of mitochondria and other cargos along microtubules. The sequence is that of Fasciculation and elongation protein zeta-1 (FEZ1) from Homo sapiens (Human).